The following is a 219-amino-acid chain: C-8 sterol isomerase erg2 (219 aa).

The helical transmembrane segment at 1-21 threads the bilayer; it reads MKLTKFLTVFIPFIAGLIYYI.

It belongs to the ERG2 family.

The protein resides in the endoplasmic reticulum membrane. It carries out the reaction fecosterol = episterol. Its pathway is steroid metabolism; ergosterol biosynthesis. Functionally, C-8 sterol isomerase; part of the third module of ergosterol biosynthesis pathway that includes by the late steps of the pathway. Erg2 catalyzes the reaction which results in unsaturation at C-7 in the B ring of sterols and thus converts fecosterol to episterol. The third module or late pathway involves the ergosterol synthesis itself through consecutive reactions that mainly occur in the endoplasmic reticulum (ER) membrane. Firstly, the squalene synthase erg9 catalyzes the condensation of 2 farnesyl pyrophosphate moieties to form squalene, which is the precursor of all steroids. Secondly, squalene is converted into lanosterol by the consecutive action of the squalene epoxidase erg1 and the lanosterol synthase erg7. The lanosterol 14-alpha-demethylase erg11/cyp1 catalyzes C14-demethylation of lanosterol to produce 4,4'-dimethyl cholesta-8,14,24-triene-3-beta-ol. In the next steps, a complex process involving various demethylation, reduction and desaturation reactions catalyzed by the C-14 reductase erg24 and the C-4 demethylation complex erg25-erg26-erg27 leads to the production of zymosterol. Erg28 likely functions in the C-4 demethylation complex reaction by tethering erg26 and Erg27 to the endoplasmic reticulum or to facilitate interaction between these proteins. Then, the sterol 24-C-methyltransferase erg6 catalyzes the methyl transfer from S-adenosyl-methionine to the C-24 of zymosterol to form fecosterol. The C-8 sterol isomerase erg2 catalyzes the reaction which results in unsaturation at C-7 in the B ring of sterols and thus converts fecosterol to episterol. The sterol-C5-desaturases erg31 and erg32 then catalyze the introduction of a C-5 double bond in the B ring to produce 5-dehydroepisterol. The C-22 sterol desaturase erg5 further converts 5-dehydroepisterol into ergosta-5,7,22,24(28)-tetraen-3beta-ol by forming the C-22(23) double bond in the sterol side chain. Finally, ergosta-5,7,22,24(28)-tetraen-3beta-ol is substrate of the C-24(28) sterol reductase erg4 to produce ergosterol. In the genus Schizosaccharomyces, a second route exists between lanosterol and fecosterol, via the methylation of lanosterol to eburicol by erg6, followed by C14-demethylation by erg11/cyp1 and C4-demethylation by the demethylation complex erg25-erg26-erg27. This Schizosaccharomyces pombe (strain 972 / ATCC 24843) (Fission yeast) protein is C-8 sterol isomerase erg2.